The sequence spans 953 residues: ALS2 C-terminal-like protein (953 aa).

MORN repeat units follow at residues 358 to 380 (YEGE…DGRN), 381 to 403 (HVGD…QASE), 409 to 431 (YKCH…TSEV), 432 to 454 (YKGY…PQAP), 459 to 481 (YTGH…DRGE), 483 to 505 (YIGM…AGVC), 506 to 528 (YQGT…DDSL), and 529 to 552 (YEGT…NGFT). In terms of domain architecture, VPS9 spans 796–942 (LFPDARLLEF…IQKEDMRLHR (147 aa)).

Homodimer. Forms a heteromeric complex with ALS2. Interacts with ALS2 and RAB5A.

It localises to the cytoplasm. In terms of biological role, acts as a guanine nucleotide exchange factor (GEF) for Rab5 GTPase. Regulates the ALS2-mediated endosome dynamics. The protein is ALS2 C-terminal-like protein (ALS2CL) of Bos taurus (Bovine).